A 364-amino-acid polypeptide reads, in one-letter code: sn-glycerol-3-phosphate import ATP-binding protein UgpC (364 aa).

The ABC transporter domain occupies V4–I235. G37–S44 provides a ligand contact to ATP.

The protein belongs to the ABC transporter superfamily. sn-glycerol-3-phosphate importer (TC 3.A.1.1.3) family. The complex is composed of two ATP-binding proteins (UgpC), two transmembrane proteins (UgpA and UgpE) and a solute-binding protein (UgpB).

The protein localises to the cell inner membrane. The enzyme catalyses sn-glycerol 3-phosphate(out) + ATP + H2O = sn-glycerol 3-phosphate(in) + ADP + phosphate + H(+). Part of the ABC transporter complex UgpBAEC involved in sn-glycerol-3-phosphate (G3P) import. Responsible for energy coupling to the transport system. The sequence is that of sn-glycerol-3-phosphate import ATP-binding protein UgpC from Rhodopseudomonas palustris (strain HaA2).